The chain runs to 440 residues: Cytochrome c biogenesis protein Ccs1 (440 aa).

3 helical membrane-spanning segments follow: residues 25–45, 84–104, and 170–190; these read LQFSIILLLLIAIFSTIGTVI, TWWFLSLLFIFSLSLFTCSIS, and LAPIFVHGSIILLLTGSVLGL.

Belongs to the Ccs1/CcsB family. May interact with CcsA.

It is found in the plastid. Its subcellular location is the chloroplast thylakoid membrane. Its function is as follows. Required during biogenesis of c-type cytochromes (cytochrome c6 and cytochrome f) at the step of heme attachment. This chain is Cytochrome c biogenesis protein Ccs1, found in Pyropia yezoensis (Susabi-nori).